The following is an 864-amino-acid chain: Bifunctional uridylyltransferase/uridylyl-removing enzyme (864 aa).

The tract at residues 1-328 (MLFPYFPLSE…QTNEPVQVRL (328 aa)) is uridylyltransferase. A uridylyl-removing region spans residues 329–686 (LDKEFQCVNN…ISNRFSEGGT (358 aa)). The HD domain maps to 446–562 (VDEHIVRTLL…LHFAEAVQNN (117 aa)). 2 consecutive ACT domains span residues 687-766 (EIFV…TFRA) and 793-864 (EMEL…LEPK).

Belongs to the GlnD family. Requires Mg(2+) as cofactor.

It catalyses the reaction [protein-PII]-L-tyrosine + UTP = [protein-PII]-uridylyl-L-tyrosine + diphosphate. It carries out the reaction [protein-PII]-uridylyl-L-tyrosine + H2O = [protein-PII]-L-tyrosine + UMP + H(+). With respect to regulation, uridylyltransferase (UTase) activity is inhibited by glutamine, while glutamine activates uridylyl-removing (UR) activity. In terms of biological role, modifies, by uridylylation and deuridylylation, the PII regulatory proteins (GlnB and homologs), in response to the nitrogen status of the cell that GlnD senses through the glutamine level. Under low glutamine levels, catalyzes the conversion of the PII proteins and UTP to PII-UMP and PPi, while under higher glutamine levels, GlnD hydrolyzes PII-UMP to PII and UMP (deuridylylation). Thus, controls uridylylation state and activity of the PII proteins, and plays an important role in the regulation of nitrogen assimilation and metabolism. This chain is Bifunctional uridylyltransferase/uridylyl-removing enzyme, found in Pasteurella multocida (strain Pm70).